Reading from the N-terminus, the 315-residue chain is Methionyl-tRNA formyltransferase (315 aa).

The N-terminal domain stretch occupies residues 2 to 189 (SDSLRIIFAG…LITTLKQLAD (188 aa)). 113-116 (SLLP) contacts (6S)-5,6,7,8-tetrahydrofolate. A C-terminal domain region spans residues 210–315 (KEEARIDWSL…EWFIPGNRLA (106 aa)).

It belongs to the Fmt family.

It catalyses the reaction L-methionyl-tRNA(fMet) + (6R)-10-formyltetrahydrofolate = N-formyl-L-methionyl-tRNA(fMet) + (6S)-5,6,7,8-tetrahydrofolate + H(+). Attaches a formyl group to the free amino group of methionyl-tRNA(fMet). The formyl group appears to play a dual role in the initiator identity of N-formylmethionyl-tRNA by promoting its recognition by IF2 and preventing the misappropriation of this tRNA by the elongation apparatus. This Salmonella choleraesuis (strain SC-B67) protein is Methionyl-tRNA formyltransferase.